The primary structure comprises 306 residues: GTPase Era (306 aa).

An Era-type G domain is found at 13-181; the sequence is YCGFIAIVGR…EKIVRESLHE (169 aa). A G1 region spans residues 21–28; that stretch reads GRPNVGKS. 21-28 provides a ligand contact to GTP; the sequence is GRPNVGKS. Positions 47–51 are G2; that stretch reads QTTRH. Residues 68–71 are G3; it reads DTPG. Residues 68–72 and 130–133 contribute to the GTP site; these read DTPGL and NKID. The segment at 130-133 is G4; it reads NKID. A G5 region spans residues 160 to 162; it reads ISA. The region spanning 212–289 is the KH type-2 domain; that stretch reads TGDELPYSVT…HLELWVKVKS (78 aa).

The protein belongs to the TRAFAC class TrmE-Era-EngA-EngB-Septin-like GTPase superfamily. Era GTPase family. Monomer.

Its subcellular location is the cytoplasm. It is found in the cell inner membrane. An essential GTPase that binds both GDP and GTP, with rapid nucleotide exchange. Plays a role in 16S rRNA processing and 30S ribosomal subunit biogenesis and possibly also in cell cycle regulation and energy metabolism. The protein is GTPase Era of Pasteurella multocida (strain Pm70).